The chain runs to 231 residues: Lipoprotein-releasing system ATP-binding protein LolD (231 aa).

The ABC transporter domain maps to 11–231 (LQAEHLGKVY…HMENGRLQPD (221 aa)). 47-54 (GASGSGKS) contributes to the ATP binding site.

It belongs to the ABC transporter superfamily. Lipoprotein translocase (TC 3.A.1.125) family. As to quaternary structure, the complex is composed of two ATP-binding proteins (LolD) and two transmembrane proteins (LolC and LolE).

The protein localises to the cell inner membrane. Functionally, part of the ABC transporter complex LolCDE involved in the translocation of mature outer membrane-directed lipoproteins, from the inner membrane to the periplasmic chaperone, LolA. Responsible for the formation of the LolA-lipoprotein complex in an ATP-dependent manner. The chain is Lipoprotein-releasing system ATP-binding protein LolD from Bordetella bronchiseptica (strain ATCC BAA-588 / NCTC 13252 / RB50) (Alcaligenes bronchisepticus).